Reading from the N-terminus, the 331-residue chain is Ketol-acid reductoisomerase (NADP(+)) (331 aa).

In terms of domain architecture, KARI N-terminal Rossmann spans 2-182; it reads AKMYYDQDAD…GGTKAGAIET (181 aa). NADP(+) contacts are provided by residues 25–28, S51, S53, and 83–86; these read FGSQ and DEKQ. H108 is a catalytic residue. Residue G134 participates in NADP(+) binding. Residues 183–328 form the KARI C-terminal knotted domain; sequence TFKEETETDL…KSLREMMPWL (146 aa). Residues D191, E195, E227, and E231 each contribute to the Mg(2+) site. A substrate-binding site is contributed by S252.

It belongs to the ketol-acid reductoisomerase family. Mg(2+) is required as a cofactor.

It carries out the reaction (2R)-2,3-dihydroxy-3-methylbutanoate + NADP(+) = (2S)-2-acetolactate + NADPH + H(+). The enzyme catalyses (2R,3R)-2,3-dihydroxy-3-methylpentanoate + NADP(+) = (S)-2-ethyl-2-hydroxy-3-oxobutanoate + NADPH + H(+). Its pathway is amino-acid biosynthesis; L-isoleucine biosynthesis; L-isoleucine from 2-oxobutanoate: step 2/4. The protein operates within amino-acid biosynthesis; L-valine biosynthesis; L-valine from pyruvate: step 2/4. Involved in the biosynthesis of branched-chain amino acids (BCAA). Catalyzes an alkyl-migration followed by a ketol-acid reduction of (S)-2-acetolactate (S2AL) to yield (R)-2,3-dihydroxy-isovalerate. In the isomerase reaction, S2AL is rearranged via a Mg-dependent methyl migration to produce 3-hydroxy-3-methyl-2-ketobutyrate (HMKB). In the reductase reaction, this 2-ketoacid undergoes a metal-dependent reduction by NADPH to yield (R)-2,3-dihydroxy-isovalerate. The polypeptide is Ketol-acid reductoisomerase (NADP(+)) (Caldanaerobacter subterraneus subsp. tengcongensis (strain DSM 15242 / JCM 11007 / NBRC 100824 / MB4) (Thermoanaerobacter tengcongensis)).